Here is a 396-residue protein sequence, read N- to C-terminus: RNA binding protein fox-1 homolog 1 (396 aa).

A disordered region spans residues 1–119 (MNCEREQLRG…ESKSQPKRLH (119 aa)). Polar residues predominate over residues 67-86 (PPTQTHSEQSADTSAQTVSG). The segment covering 87–98 (TATQTDDAAPTD) has biased composition (low complexity). The span at 99-112 (GQPQTQPSENTESK) shows a compositional bias: polar residues. Residues 116-192 (KRLHVSNIPF…RKIEVNNATA (77 aa)) enclose the RRM domain. Arginine 316 and alanine 337 each carry asymmetric dimethylarginine. Position 387 is an omega-N-methylarginine (arginine 387).

As to quaternary structure, binds to the C-terminus of ATXN2. Detected in brain (at protein level). Detected in heart, brain, neurons, skeletal muscle and embryo.

It is found in the nucleus. The protein localises to the cytoplasm. Its function is as follows. RNA-binding protein that regulates alternative splicing events by binding to 5'-UGCAUGU-3' elements. Prevents binding of U2AF2 to the 3'-splice site. Regulates alternative splicing of tissue-specific exons and of differentially spliced exons during erythropoiesis. The polypeptide is RNA binding protein fox-1 homolog 1 (Rbfox1) (Mus musculus (Mouse)).